The chain runs to 339 residues: DNA-directed RNA polymerase subunit alpha (339 aa).

Residues 1 to 235 are alpha N-terminal domain (alpha-NTD); sequence MTIQKNWQEL…DQLNVFVNFE (235 aa). Positions 251-339 are alpha C-terminal domain (alpha-CTD); the sequence is FNPAFLKKVD…ELAKRFEDHY (89 aa).

This sequence belongs to the RNA polymerase alpha chain family. Homodimer. The RNAP catalytic core consists of 2 alpha, 1 beta, 1 beta' and 1 omega subunit. When a sigma factor is associated with the core the holoenzyme is formed, which can initiate transcription.

The enzyme catalyses RNA(n) + a ribonucleoside 5'-triphosphate = RNA(n+1) + diphosphate. In terms of biological role, DNA-dependent RNA polymerase catalyzes the transcription of DNA into RNA using the four ribonucleoside triphosphates as substrates. This is DNA-directed RNA polymerase subunit alpha from Rhodopseudomonas palustris (strain ATCC BAA-98 / CGA009).